The sequence spans 479 residues: Ribulose bisphosphate carboxylase large chain (479 aa).

The propeptide occupies 1–2; the sequence is MS. 2 residues coordinate substrate: asparagine 123 and threonine 173. Lysine 175 serves as the catalytic Proton acceptor. Lysine 177 contacts substrate. Positions 201, 203, and 204 each coordinate Mg(2+). N6-carboxylysine is present on lysine 201. Phosphoserine is present on serine 208. Histidine 294 serves as the catalytic Proton acceptor. Substrate contacts are provided by arginine 295 and histidine 327. Position 330 is a phosphothreonine (threonine 330). Substrate is bound at residue serine 379.

Belongs to the RuBisCO large chain family. Type I subfamily. In terms of assembly, heterohexadecamer of 8 large chains and 8 small chains; disulfide-linked. The disulfide link is formed within the large subunit homodimers. The cofactor is Mg(2+). In terms of processing, the disulfide bond which can form in the large chain dimeric partners within the hexadecamer appears to be associated with oxidative stress and protein turnover.

It localises to the plastid. Its subcellular location is the chloroplast. The enzyme catalyses 2 (2R)-3-phosphoglycerate + 2 H(+) = D-ribulose 1,5-bisphosphate + CO2 + H2O. The catalysed reaction is D-ribulose 1,5-bisphosphate + O2 = 2-phosphoglycolate + (2R)-3-phosphoglycerate + 2 H(+). RuBisCO catalyzes two reactions: the carboxylation of D-ribulose 1,5-bisphosphate, the primary event in carbon dioxide fixation, as well as the oxidative fragmentation of the pentose substrate in the photorespiration process. Both reactions occur simultaneously and in competition at the same active site. The polypeptide is Ribulose bisphosphate carboxylase large chain (Nasturtium officinale (Watercress)).